The following is a 671-amino-acid chain: UvrABC system protein B (671 aa).

Residues 26-183 (EGLENGLAHQ…RRLSELQYSR (158 aa)) enclose the Helicase ATP-binding domain. 39–46 (GVTGSGKT) provides a ligand contact to ATP. A Beta-hairpin motif is present at residues 92–115 (YYDYYQPEAYVPSSDTFIEKDASV). Residues 431–593 (QVDDLLSEIR…IIPQGLNKKI (163 aa)) enclose the Helicase C-terminal domain. Residues 631 to 666 (DQKIRELEAKMYTYAQNLEFEQAAELRDQVHQLRQQ) form the UVR domain.

It belongs to the UvrB family. As to quaternary structure, forms a heterotetramer with UvrA during the search for lesions. Interacts with UvrC in an incision complex.

The protein localises to the cytoplasm. In terms of biological role, the UvrABC repair system catalyzes the recognition and processing of DNA lesions. A damage recognition complex composed of 2 UvrA and 2 UvrB subunits scans DNA for abnormalities. Upon binding of the UvrA(2)B(2) complex to a putative damaged site, the DNA wraps around one UvrB monomer. DNA wrap is dependent on ATP binding by UvrB and probably causes local melting of the DNA helix, facilitating insertion of UvrB beta-hairpin between the DNA strands. Then UvrB probes one DNA strand for the presence of a lesion. If a lesion is found the UvrA subunits dissociate and the UvrB-DNA preincision complex is formed. This complex is subsequently bound by UvrC and the second UvrB is released. If no lesion is found, the DNA wraps around the other UvrB subunit that will check the other stand for damage. This Yersinia pestis bv. Antiqua (strain Antiqua) protein is UvrABC system protein B.